A 494-amino-acid chain; its full sequence is Probable cytochrome P450 313a4 (494 aa).

Cys440 contributes to the heme binding site.

It belongs to the cytochrome P450 family. Heme is required as a cofactor.

The protein resides in the endoplasmic reticulum membrane. Its subcellular location is the microsome membrane. Functionally, may be involved in the metabolism of insect hormones and in the breakdown of synthetic insecticides. The protein is Probable cytochrome P450 313a4 (Cyp313a4) of Drosophila melanogaster (Fruit fly).